The primary structure comprises 206 residues: Small ribosomal subunit protein uS5 (206 aa).

Residues 1-23 show a composition bias toward polar residues; it reads MTDTPTKQENQSKTENPPSSNAN. The interval 1-52 is disordered; the sequence is MTDTPTKQENQSKTENPPSSNANEQRRGNRNNDRKRNRRGDSKNERDSEWQE. The segment covering 24–52 has biased composition (basic and acidic residues); sequence EQRRGNRNNDRKRNRRGDSKNERDSEWQE. Positions 50–113 constitute an S5 DRBM domain; that stretch reads WQERVVQIRR…SDGKKHLVRV (64 aa).

It belongs to the universal ribosomal protein uS5 family. Part of the 30S ribosomal subunit. Contacts proteins S4 and S8.

Functionally, with S4 and S12 plays an important role in translational accuracy. Located at the back of the 30S subunit body where it stabilizes the conformation of the head with respect to the body. The polypeptide is Small ribosomal subunit protein uS5 (Prochlorococcus marinus subsp. pastoris (strain CCMP1986 / NIES-2087 / MED4)).